The sequence spans 338 residues: Ornithine carbamoyltransferase (338 aa).

Carbamoyl phosphate contacts are provided by residues S56–T59, Q83, R107, and H134–Q137. L-ornithine contacts are provided by residues N168, D232, and S236–M237. Carbamoyl phosphate is bound by residues C274–L275 and R320.

Belongs to the aspartate/ornithine carbamoyltransferase superfamily. OTCase family.

It is found in the cytoplasm. It carries out the reaction carbamoyl phosphate + L-ornithine = L-citrulline + phosphate + H(+). It participates in amino-acid biosynthesis; L-arginine biosynthesis; L-arginine from L-ornithine and carbamoyl phosphate: step 1/3. Its function is as follows. Reversibly catalyzes the transfer of the carbamoyl group from carbamoyl phosphate (CP) to the N(epsilon) atom of ornithine (ORN) to produce L-citrulline. In Photorhabdus laumondii subsp. laumondii (strain DSM 15139 / CIP 105565 / TT01) (Photorhabdus luminescens subsp. laumondii), this protein is Ornithine carbamoyltransferase.